We begin with the raw amino-acid sequence, 346 residues long: Probable alpha-1,2-galactosyltransferase gmh2 (346 aa).

The Cytoplasmic segment spans residues 1-11 (MALMLSRIPRR). The chain crosses the membrane as a helical; Signal-anchor for type II membrane protein span at residues 12 to 32 (FFFLFLTVGLIAGAFLYSLIY). The Lumenal portion of the chain corresponds to 33–346 (FVDVDLVSKV…LWQKFYALID (314 aa)). N-linked (GlcNAc...) asparagine glycans are attached at residues N64, N142, and N224.

This sequence belongs to the glycosyltransferase 34 family.

Its subcellular location is the golgi apparatus membrane. This Schizosaccharomyces pombe (strain 972 / ATCC 24843) (Fission yeast) protein is Probable alpha-1,2-galactosyltransferase gmh2 (gmh2).